The following is a 56-amino-acid chain: Small ribosomal subunit protein uS14 (56 aa).

Residues cysteine 21, cysteine 24, cysteine 39, and cysteine 42 each contribute to the Zn(2+) site.

The protein belongs to the universal ribosomal protein uS14 family. It depends on Zn(2+) as a cofactor.

This chain is Small ribosomal subunit protein uS14 (rps29A), found in Guillardia theta (Cryptophyte).